The sequence spans 225 residues: Interleukin-6 (225 aa).

A signal peptide spans 1-24 (MPSRLNVFWLCAAALAALLRCAPA). The N-linked (GlcNAc...) asparagine glycan is linked to Asn-98.

This sequence belongs to the IL-6 superfamily. Component of a hexamer of two molecules each of IL6, IL6R and IL6ST; first binds to IL6R to associate with the signaling subunit IL6ST. As to expression, expressed in white muscle, skin, spleen, anterior intestine and stomach. Not expressed in brain, gill, head kidney, posterior intestine and adipose tissue.

The protein resides in the secreted. In terms of biological role, cytokine with a wide variety of biological functions in immunity, tissue regeneration, and metabolism. Binds to IL6R, then the complex associates to the signaling subunit IL6ST/gp130 to trigger the intracellular IL6-signaling pathway. The interaction with the membrane-bound IL6R and IL6ST stimulates 'classic signaling', whereas the binding of IL6 and soluble IL6R to IL6ST stimulates 'trans-signaling'. Alternatively, 'cluster signaling' occurs when membrane-bound IL6:IL6R complexes on transmitter cells activate IL6ST receptors on neighboring receiver cells. The chain is Interleukin-6 (il6) from Sparus aurata (Gilthead sea bream).